The chain runs to 491 residues: Aspartyl/glutamyl-tRNA(Asn/Gln) amidotransferase subunit B (491 aa).

The protein belongs to the GatB/GatE family. GatB subfamily. Heterotrimer of A, B and C subunits.

It carries out the reaction L-glutamyl-tRNA(Gln) + L-glutamine + ATP + H2O = L-glutaminyl-tRNA(Gln) + L-glutamate + ADP + phosphate + H(+). The catalysed reaction is L-aspartyl-tRNA(Asn) + L-glutamine + ATP + H2O = L-asparaginyl-tRNA(Asn) + L-glutamate + ADP + phosphate + 2 H(+). Its function is as follows. Allows the formation of correctly charged Asn-tRNA(Asn) or Gln-tRNA(Gln) through the transamidation of misacylated Asp-tRNA(Asn) or Glu-tRNA(Gln) in organisms which lack either or both of asparaginyl-tRNA or glutaminyl-tRNA synthetases. The reaction takes place in the presence of glutamine and ATP through an activated phospho-Asp-tRNA(Asn) or phospho-Glu-tRNA(Gln). This Parasynechococcus marenigrum (strain WH8102) protein is Aspartyl/glutamyl-tRNA(Asn/Gln) amidotransferase subunit B.